A 72-amino-acid polypeptide reads, in one-letter code: Translation initiation factor IF-1 (72 aa).

One can recognise an S1-like domain in the interval 1–72; sequence MAKDNVIEIE…SKGRITYRFK (72 aa).

The protein belongs to the IF-1 family. In terms of assembly, component of the 30S ribosomal translation pre-initiation complex which assembles on the 30S ribosome in the order IF-2 and IF-3, IF-1 and N-formylmethionyl-tRNA(fMet); mRNA recruitment can occur at any time during PIC assembly.

Its subcellular location is the cytoplasm. Its function is as follows. One of the essential components for the initiation of protein synthesis. Stabilizes the binding of IF-2 and IF-3 on the 30S subunit to which N-formylmethionyl-tRNA(fMet) subsequently binds. Helps modulate mRNA selection, yielding the 30S pre-initiation complex (PIC). Upon addition of the 50S ribosomal subunit IF-1, IF-2 and IF-3 are released leaving the mature 70S translation initiation complex. The protein is Translation initiation factor IF-1 of Pediococcus pentosaceus (strain ATCC 25745 / CCUG 21536 / LMG 10740 / 183-1w).